Reading from the N-terminus, the 209-residue chain is Uracil phosphoribosyltransferase (209 aa).

Residues Arg-79, Arg-104, and 131–139 (DPMLATGGT) contribute to the 5-phospho-alpha-D-ribose 1-diphosphate site. Uracil is bound by residues Ile-194 and 199–201 (GDA). Asp-200 contacts 5-phospho-alpha-D-ribose 1-diphosphate.

Belongs to the UPRTase family. The cofactor is Mg(2+).

It catalyses the reaction UMP + diphosphate = 5-phospho-alpha-D-ribose 1-diphosphate + uracil. Its pathway is pyrimidine metabolism; UMP biosynthesis via salvage pathway; UMP from uracil: step 1/1. Its activity is regulated as follows. Allosterically activated by GTP. In terms of biological role, catalyzes the conversion of uracil and 5-phospho-alpha-D-ribose 1-diphosphate (PRPP) to UMP and diphosphate. This Pseudoalteromonas translucida (strain TAC 125) protein is Uracil phosphoribosyltransferase.